The sequence spans 65 residues: MVSVQMNDNESIDKMLKRFKKKYERAGVLKEFRQNAYFVKPSVDGRLKRSRSKRRAQRANEERNS.

The tract at residues 45 to 65 is disordered; that stretch reads GRLKRSRSKRRAQRANEERNS. The span at 48–57 shows a compositional bias: basic residues; that stretch reads KRSRSKRRAQ.

The protein belongs to the bacterial ribosomal protein bS21 family.

This is Small ribosomal subunit protein bS21 from Chlorobium luteolum (strain DSM 273 / BCRC 81028 / 2530) (Pelodictyon luteolum).